Reading from the N-terminus, the 133-residue chain is Glycine cleavage system H protein (133 aa).

Positions isoleucine 24–arginine 106 constitute a Lipoyl-binding domain. Lysine 65 is subject to N6-lipoyllysine.

This sequence belongs to the GcvH family. The glycine cleavage system is composed of four proteins: P, T, L and H. The cofactor is (R)-lipoate.

Functionally, the glycine cleavage system catalyzes the degradation of glycine. The H protein shuttles the methylamine group of glycine from the P protein to the T protein. The chain is Glycine cleavage system H protein from Crocosphaera subtropica (strain ATCC 51142 / BH68) (Cyanothece sp. (strain ATCC 51142)).